Reading from the N-terminus, the 311-residue chain is 2-phospho-L-lactate transferase (311 aa).

2 residues coordinate 7,8-didemethyl-8-hydroxy-5-deazariboflavin: D52 and R91.

The protein belongs to the CofD family. Homodimer. It depends on Mg(2+) as a cofactor.

The catalysed reaction is (2S)-lactyl-2-diphospho-5'-guanosine + 7,8-didemethyl-8-hydroxy-5-deazariboflavin = oxidized coenzyme F420-0 + GMP + H(+). It participates in cofactor biosynthesis; coenzyme F420 biosynthesis. Its activity is regulated as follows. Inhibited by EDTA in vitro. Catalyzes the transfer of the 2-phospholactate moiety from (2S)-lactyl-2-diphospho-5'-guanosine to 7,8-didemethyl-8-hydroxy-5-deazariboflavin (FO) with the formation of oxidized coenzyme F420-0 and GMP. In Methanocaldococcus jannaschii (strain ATCC 43067 / DSM 2661 / JAL-1 / JCM 10045 / NBRC 100440) (Methanococcus jannaschii), this protein is 2-phospho-L-lactate transferase.